A 141-amino-acid chain; its full sequence is Protein stum homolog (141 aa).

S26 bears the Phosphoserine mark. Transmembrane regions (helical) follow at residues 51 to 71 (FPVA…GTFV) and 87 to 107 (RHVC…VLTA).

Belongs to the SPEC3 family. Stum subfamily.

The protein resides in the membrane. The polypeptide is Protein stum homolog (Mus musculus (Mouse)).